Consider the following 388-residue polypeptide: Chorismate synthase (388 aa).

NADP(+) is bound by residues R39 and R45. Residues 132-134 (RSS), 251-252 (NA), G296, 311-315 (KPIPT), and R337 each bind FMN.

Belongs to the chorismate synthase family. As to quaternary structure, homotetramer. FMNH2 is required as a cofactor.

It catalyses the reaction 5-O-(1-carboxyvinyl)-3-phosphoshikimate = chorismate + phosphate. It participates in metabolic intermediate biosynthesis; chorismate biosynthesis; chorismate from D-erythrose 4-phosphate and phosphoenolpyruvate: step 7/7. Functionally, catalyzes the anti-1,4-elimination of the C-3 phosphate and the C-6 proR hydrogen from 5-enolpyruvylshikimate-3-phosphate (EPSP) to yield chorismate, which is the branch point compound that serves as the starting substrate for the three terminal pathways of aromatic amino acid biosynthesis. This reaction introduces a second double bond into the aromatic ring system. This chain is Chorismate synthase, found in Staphylococcus haemolyticus (strain JCSC1435).